We begin with the raw amino-acid sequence, 973 residues long: UvrABC system protein A (973 aa).

Residue 34-41 (GLSGSGKS) participates in ATP binding. ABC transporter domains are found at residues 331–609 (WAKS…PKSL) and 629–958 (PKKG…HFLK). 662–669 (GVSGGGKS) serves as a coordination point for ATP. Residues 761–787 (CEACQGDGVIKIEMHFLPDVYVTCDVC) form a C4-type zinc finger.

Belongs to the ABC transporter superfamily. UvrA family. Forms a heterotetramer with UvrB during the search for lesions.

It localises to the cytoplasm. Functionally, the UvrABC repair system catalyzes the recognition and processing of DNA lesions. UvrA is an ATPase and a DNA-binding protein. A damage recognition complex composed of 2 UvrA and 2 UvrB subunits scans DNA for abnormalities. When the presence of a lesion has been verified by UvrB, the UvrA molecules dissociate. This chain is UvrABC system protein A, found in Agrobacterium fabrum (strain C58 / ATCC 33970) (Agrobacterium tumefaciens (strain C58)).